The chain runs to 471 residues: MSQLLTARQAEELHKSMIAYLLSVNLSKSAAALREELADSVHLDDATAKKYEGLLEKKWTSVVRLQKKIMDLESRNAALQQELDSATPTSLSRRNQDPASWLPRAPARHSLQSHRGPVTCVAFHPIFSSLASGSEDTTIKIWDWELGELERTIKGHTRAVLDVDYGGPRGGTLLASCSSDLTIKLWDPSDEYKNIRTLPGHDHSVSAVRFIPSGAAGSPMSGNLLASASRDKTIRIWDVTTGYCVKTIQGHLDWVRDVFPSPDGRFLMSGGDDRVPRLLDASSGETKSTFIGHEHVVECVTIAPAASYPHLAALAGLKKPPPASSSAEFVATGSRDKTIKIWDSRGTLIKTLVGHDNWIRALVFHPGGKYLLSVSDDKTLRCWDLSQECKCVRTVSDAHGHFVSCIRWAPNIINESGLVSGEGGINGQGTPSMNGVSISTTSKKEDTGGGGKIRCVIATGSVDMNVRVFAS.

Residues 9–41 (QAEELHKSMIAYLLSVNLSKSAAALREELADSV) form the LisH domain. Residues 60–87 (TSVVRLQKKIMDLESRNAALQQELDSAT) adopt a coiled-coil conformation. Polar residues predominate over residues 83-93 (LDSATPTSLSR). A disordered region spans residues 83-108 (LDSATPTSLSRRNQDPASWLPRAPAR). WD repeat units follow at residues 113 to 154 (SHRG…RTIK), 156 to 196 (HTRA…KNIR), 200 to 247 (GHDH…CVKT), 250 to 289 (GHLD…TKST), 292 to 352 (GHEH…IKTL), 354 to 393 (GHDN…KCVR), 398 to 428 (AHGH…INGQ), and 429 to 467 (GTPS…MNVR). The segment at 424-449 (GINGQGTPSMNGVSISTTSKKEDTGG) is disordered. The segment covering 428 to 441 (QGTPSMNGVSISTT) has biased composition (polar residues).

Belongs to the WD repeat LIS1/nudF family. Self-associates. Interacts with NDL1 and dynein.

The protein resides in the cytoplasm. The protein localises to the cytoskeleton. Its subcellular location is the spindle pole. Positively regulates the activity of the minus-end directed microtubule motor protein dynein. May enhance dynein-mediated microtubule sliding by targeting dynein to the microtubule plus end. Required for nuclear migration during vegetative growth as well as development. Required for retrograde early endosome (EE) transport from the hyphal tip. Required for localization of dynein to the mitotic spindle poles. Recruits additional proteins to the dynein complex at SPBs. The protein is Nuclear distribution protein PAC1 of Coccidioides posadasii (strain C735) (Valley fever fungus).